A 288-amino-acid chain; its full sequence is MSRDILHRYLFDNADVRGQLVQLEDSFQAMLAAQDYPKALQVLLGELMAATSLLTATIKFSGDISVQLQGDGPVSLAVINGNNELQLRGVARWKGELAKDASLPTLLGKGYMVITLTPDEGERYQGIVSLEHGTLAACLEEYFNQSEQLPTQIHLFATNAQAAGMLLQVLPSKQEQNDDFSHLSVLTQTIKPQELFDLGAEEVLHRLYHEEEVRLFEPMDVSFKCTCSRERSAGALKTLSLVELETILAEEGKIDMGCEYCTASYSFDAIDIAALFSDNADTSQTKTQ.

2 disulfide bridges follow: C225-C227 and C258-C261.

This sequence belongs to the HSP33 family. Post-translationally, under oxidizing conditions two disulfide bonds are formed involving the reactive cysteines. Under reducing conditions zinc is bound to the reactive cysteines and the protein is inactive.

The protein resides in the cytoplasm. Functionally, redox regulated molecular chaperone. Protects both thermally unfolding and oxidatively damaged proteins from irreversible aggregation. Plays an important role in the bacterial defense system toward oxidative stress. The chain is 33 kDa chaperonin from Shewanella denitrificans (strain OS217 / ATCC BAA-1090 / DSM 15013).